A 271-amino-acid chain; its full sequence is Transcription factor PU.1 (271 aa).

The tract at residues leucine 124–glutamate 164 is disordered. A phosphoserine mark is found at serine 141 and serine 147. Residues leucine 154–glutamate 164 are compositionally biased toward low complexity. A DNA-binding region (ETS) is located at residues isoleucine 171–serine 254. Positions 218, 231, 234, and 244 each coordinate DNA.

Belongs to the ETS family. As to quaternary structure, binds DNA as a monomer. Can form homomers. Directly interacts with CEBPD/NF-IL6-beta; this interaction does not affect DNA-binding properties of each partner. Interacts with NONO/p54(nrb). Interacts with RUNX1/AML1. Interacts with GFI1; the interaction represses SPI1 transcriptional activity, hence blocks SPI1-induced macrophage differentiation of myeloid progenitor cells. Interacts with CEBPE. Interacts with IRF4/Pip and IRF8. Interacts with JUN. Interacts with RB1. Interacts with TBP.

Its subcellular location is the nucleus. With respect to regulation, transcriptional activity at macrophage-specific genes is inhibited by interaction with GFI1, which results in the inhibition of SPI1-induced macrophage differentiation of myeloid progenitor cells, but not that of the granulocyte lineage. Pioneer transcription factor, which controls hematopoietic cell fate by decompacting stem cell heterochromatin and allowing other transcription factors to enter otherwise inaccessible genomic sites. Once in open chromatin, can directly control gene expression by binding genetic regulatory elements and can also more broadly influence transcription by recruiting transcription factors, such as interferon regulatory factors (IRFs), to otherwise inaccessible genomic regions. Transcriptionally activates genes important for myeloid and lymphoid lineages, such as CSF1R or FCER1A. Transcriptional activation from certain promoters, possibly containing low affinity binding sites, is achieved cooperatively with other transcription factors. FCER1A transactivation is achieved in cooperation with GATA1. May be particularly important for the pro- to pre-B cell transition. Binds (via the ETS domain) onto the purine-rich DNA core sequence 5'-GAGGAA-3', also known as the PU-box. In vitro can bind RNA and interfere with pre-mRNA splicing. This chain is Transcription factor PU.1 (Spi1), found in Rattus norvegicus (Rat).